We begin with the raw amino-acid sequence, 335 residues long: Glycerol-3-phosphate dehydrogenase [NAD(P)+] (335 aa).

Positions 11, 30, and 106 each coordinate NADPH. 3 residues coordinate sn-glycerol 3-phosphate: Lys106, Gly135, and Ser137. Ala139 is an NADPH binding site. Positions 190, 243, 253, 254, and 255 each coordinate sn-glycerol 3-phosphate. The active-site Proton acceptor is the Lys190. An NADPH-binding site is contributed by Arg254. Positions 278 and 280 each coordinate NADPH.

Belongs to the NAD-dependent glycerol-3-phosphate dehydrogenase family.

The protein localises to the cytoplasm. It catalyses the reaction sn-glycerol 3-phosphate + NAD(+) = dihydroxyacetone phosphate + NADH + H(+). The catalysed reaction is sn-glycerol 3-phosphate + NADP(+) = dihydroxyacetone phosphate + NADPH + H(+). The protein operates within membrane lipid metabolism; glycerophospholipid metabolism. In terms of biological role, catalyzes the reduction of the glycolytic intermediate dihydroxyacetone phosphate (DHAP) to sn-glycerol 3-phosphate (G3P), the key precursor for phospholipid synthesis. In Paucimonas lemoignei (Pseudomonas lemoignei), this protein is Glycerol-3-phosphate dehydrogenase [NAD(P)+].